The primary structure comprises 377 residues: Sodium-dependent organic anion transporter (377 aa).

The Extracellular portion of the chain corresponds to 1 to 29 (MRANCSSSSACPANSSEEELPVGLEVHGN). Asn4 is a glycosylation site (N-linked (GlcNAc...) asparagine). A helical membrane pass occupies residues 30 to 50 (LELVFTVVSTVMMGLLMFSLG). Residues 51 to 67 (CSVEIRKLWSHIRRPWG) are Cytoplasmic-facing. Residues 68–88 (IAVGLLCQFGLMPFTAYLLAI) form a helical membrane-spanning segment. Topologically, residues 89–97 (SFSLKPVQA) are extracellular. The helical transmembrane segment at 98 to 118 (IAVLIMGCCPGGTISNIFTFW) threads the bilayer. At 119–133 (VDGDMDLSISMTTCS) the chain is on the cytoplasmic side. The chain crosses the membrane as a helical span at residues 134-154 (TVAALGMMPLCIYLYTWSWSL). Residues 155 to 159 (QQNLT) are Extracellular-facing. Residue Asn157 is glycosylated (N-linked (GlcNAc...) asparagine). Residues 160–180 (IPYQNIGITLVCLTIPVAFGV) form a helical membrane-spanning segment. Over 181 to 195 (YVNYRWPKQSKIILK) the chain is Cytoplasmic. A helical membrane pass occupies residues 196-216 (IGAVVGGVLLLVVAVAGVVLA). At 217 to 226 (KGSWNSDITL) the chain is on the extracellular side. Residues 227-247 (LTISFIFPLIGHVTGFLLALF) form a helical membrane-spanning segment. The Cytoplasmic portion of the chain corresponds to 248–266 (THQSWQRCRTISLETGAQN). A helical membrane pass occupies residues 267–285 (IQMCITMLQLSFTAEHLVQ). The Extracellular portion of the chain corresponds to 286–290 (MLSFP). The helical transmembrane segment at 291–311 (LAYGLFQLIDGFLIVAAYQTY) threads the bilayer. The Cytoplasmic segment spans residues 312–377 (KRRLKNKHGK…EPVGHITSCE (66 aa)).

Belongs to the bile acid:sodium symporter (BASS) (TC 2.A.28) family. In terms of processing, glycosylated. As to expression, highly expressed in testis, placenta and pancreas. Moderately expressed in heart, lung and mammary gland. Weakly expressed in brain, colon, kidney, liver, ovary, prostate, small intestine, spleen and thymus.

Its subcellular location is the membrane. The enzyme catalyses estrone 3-sulfate(out) + 2 Na(+)(out) = estrone 3-sulfate(in) + 2 Na(+)(in). The catalysed reaction is 17beta-estradiol 3-sulfate(out) + 2 Na(+)(out) = 17beta-estradiol 3-sulfate(in) + 2 Na(+)(in). It catalyses the reaction dehydroepiandrosterone 3-sulfate(out) + 2 Na(+)(out) = dehydroepiandrosterone 3-sulfate(in) + 2 Na(+)(in). It carries out the reaction androst-5-ene-diol 3-sulfate(out) + 2 Na(+)(out) = androst-5-ene-diol 3-sulfate(in) + 2 Na(+)(in). The enzyme catalyses pregnenolone sulfate(out) + 2 Na(+)(out) = pregnenolone sulfate(in) + 2 Na(+)(in). The catalysed reaction is taurolithocholate 3-sulfate(out) + 2 Na(+)(out) = taurolithocholate 3-sulfate(in) + 2 Na(+)(in). It catalyses the reaction androsterone 3alpha-sulfate(out) + 2 Na(+)(out) = androsterone 3alpha-sulfate(in) + 2 Na(+)(in). It carries out the reaction 5alpha-dihydrotestosterone sulfate(out) + 2 Na(+)(out) = 5alpha-dihydrotestosterone sulfate(in) + 2 Na(+)(in). The enzyme catalyses 17beta-estradiol 17-sulfate(out) + 2 Na(+)(out) = 17beta-estradiol 17-sulfate(in) + 2 Na(+)(in). The catalysed reaction is 17alpha-hydroxypregnenolone 3-sulfate(out) + 2 Na(+)(out) = 17alpha-hydroxypregnenolone 3-sulfate(in) + 2 Na(+)(in). It catalyses the reaction epiandrosterone 3-sulfate(out) + 2 Na(+)(out) = epiandrosterone 3-sulfate(in) + 2 Na(+)(in). It carries out the reaction epitestosterone 17-sulfate(out) + 2 Na(+)(out) = epitestosterone 17-sulfate(in) + 2 Na(+)(in). The enzyme catalyses testosterone 17-sulfate(out) + 2 Na(+)(out) = testosterone 17-sulfate(in) + 2 Na(+)(in). The catalysed reaction is 16alpha-hydroxydehydroepiandrosterone 3-sulfate(out) + 2 Na(+)(out) = 16alpha-hydroxydehydroepiandrosterone 3-sulfate(in) + 2 Na(+)(in). Its function is as follows. Transports sulfoconjugated steroid hormones from the extracellular compartment into the cytosol in a sodium-dependent manner without hydrolysis. Steroid sulfate hormones are commonly considered to be biologically inactive metabolites, that may be activated by steroid sulfatases into free steroids. May play an important role by delivering sulfoconjugated steroids to specific target cells in reproductive organs. May play a role transporting the estriol precursor 16alpha-hydroxydehydroepiandrosterone 3-sulfate (16a-OH-DHEAS) at the fetal blood vessel endothelium. Can also transport other sulfoconjugated molecules such as taurolithocholic acid-3-sulfate and sulfoconjugated pyrenes. The polypeptide is Sodium-dependent organic anion transporter (SLC10A6) (Homo sapiens (Human)).